A 383-amino-acid polypeptide reads, in one-letter code: Bifunctional enzyme IspD/IspF (383 aa).

The interval Met-1–Thr-226 is 2-C-methyl-D-erythritol 4-phosphate cytidylyltransferase. The 2-C-methyl-D-erythritol 2,4-cyclodiphosphate synthase stretch occupies residues Val-227–Thr-383. Residues Asp-233 and His-235 each contribute to the a divalent metal cation site. 4-CDP-2-C-methyl-D-erythritol 2-phosphate is bound by residues Asp-233 to His-235 and His-259 to Ser-260. His-267 is an a divalent metal cation binding site. 4-CDP-2-C-methyl-D-erythritol 2-phosphate contacts are provided by residues Asp-281–Gly-283, Thr-357–Glu-360, Phe-364, and Arg-367.

In the N-terminal section; belongs to the IspD/TarI cytidylyltransferase family. IspD subfamily. The protein in the C-terminal section; belongs to the IspF family. A divalent metal cation is required as a cofactor.

The enzyme catalyses 2-C-methyl-D-erythritol 4-phosphate + CTP + H(+) = 4-CDP-2-C-methyl-D-erythritol + diphosphate. It carries out the reaction 4-CDP-2-C-methyl-D-erythritol 2-phosphate = 2-C-methyl-D-erythritol 2,4-cyclic diphosphate + CMP. It participates in isoprenoid biosynthesis; isopentenyl diphosphate biosynthesis via DXP pathway; isopentenyl diphosphate from 1-deoxy-D-xylulose 5-phosphate: step 2/6. The protein operates within isoprenoid biosynthesis; isopentenyl diphosphate biosynthesis via DXP pathway; isopentenyl diphosphate from 1-deoxy-D-xylulose 5-phosphate: step 4/6. In terms of biological role, bifunctional enzyme that catalyzes the formation of 4-diphosphocytidyl-2-C-methyl-D-erythritol from CTP and 2-C-methyl-D-erythritol 4-phosphate (MEP) (IspD), and catalyzes the conversion of 4-diphosphocytidyl-2-C-methyl-D-erythritol 2-phosphate (CDP-ME2P) to 2-C-methyl-D-erythritol 2,4-cyclodiphosphate (ME-CPP) with a corresponding release of cytidine 5-monophosphate (CMP) (IspF). The protein is Bifunctional enzyme IspD/IspF of Maricaulis maris (strain MCS10) (Caulobacter maris).